Here is a 306-residue protein sequence, read N- to C-terminus: D-alanine--D-alanine ligase (306 aa).

The ATP-grasp domain maps to 107-303 (KHLFKSAGLS…FEQLVVRILE (197 aa)). 134–189 (IMQQFKKVMVKPSHEGSSIGMAQASTPQELEDALSNAFKFDSQVLVEQWISGREFT) serves as a coordination point for ATP. Positions 257, 270, and 272 each coordinate Mg(2+).

The protein belongs to the D-alanine--D-alanine ligase family. Requires Mg(2+) as cofactor. Mn(2+) is required as a cofactor.

It is found in the cytoplasm. It catalyses the reaction 2 D-alanine + ATP = D-alanyl-D-alanine + ADP + phosphate + H(+). It participates in cell wall biogenesis; peptidoglycan biosynthesis. Functionally, cell wall formation. The polypeptide is D-alanine--D-alanine ligase (Pseudoalteromonas translucida (strain TAC 125)).